Here is an 84-residue protein sequence, read N- to C-terminus: Putative membrane protein insertion efficiency factor (84 aa).

This sequence belongs to the UPF0161 family.

The protein localises to the cell inner membrane. Functionally, could be involved in insertion of integral membrane proteins into the membrane. This Shewanella frigidimarina (strain NCIMB 400) protein is Putative membrane protein insertion efficiency factor.